Here is a 366-residue protein sequence, read N- to C-terminus: 2-oxoglutarate synthase subunit KorA (366 aa).

In terms of assembly, heterotetramer of the KorA, KorB, KorC and KorD subunits.

The catalysed reaction is 2 oxidized [2Fe-2S]-[ferredoxin] + 2-oxoglutarate + CoA = succinyl-CoA + 2 reduced [2Fe-2S]-[ferredoxin] + CO2 + H(+). This Methanocaldococcus jannaschii (strain ATCC 43067 / DSM 2661 / JAL-1 / JCM 10045 / NBRC 100440) (Methanococcus jannaschii) protein is 2-oxoglutarate synthase subunit KorA (korA).